Reading from the N-terminus, the 304-residue chain is Putative S-adenosyl-L-methionine-dependent methyltransferase MAP_4189c (304 aa).

S-adenosyl-L-methionine contacts are provided by residues Asp-130 and 159 to 160 (DL).

It belongs to the UPF0677 family.

Functionally, exhibits S-adenosyl-L-methionine-dependent methyltransferase activity. This Mycolicibacterium paratuberculosis (strain ATCC BAA-968 / K-10) (Mycobacterium paratuberculosis) protein is Putative S-adenosyl-L-methionine-dependent methyltransferase MAP_4189c.